The chain runs to 109 residues: Flagellar hook-basal body complex protein FliE (109 aa).

This sequence belongs to the FliE family.

The protein resides in the bacterial flagellum basal body. This Stutzerimonas stutzeri (strain A1501) (Pseudomonas stutzeri) protein is Flagellar hook-basal body complex protein FliE.